The chain runs to 861 residues: Homeobox-leucine zipper protein HOX29 (861 aa).

Positions 2–65 (DASKYVRYTP…NRRCREKQRK (64 aa)) form a DNA-binding region, homeobox. Residues 57–99 (RRCREKQRKESSRLQALNRKLTAMNKLLMEENDRLQKQVSQLV) are a coiled coil. The 229-residue stretch at 162 to 390 (RDASPAGLMS…VAHEDTRSVI (229 aa)) folds into the START domain.

Belongs to the HD-ZIP homeobox family. Class III subfamily. Expressed in roots, stems and leaf blades.

It localises to the nucleus. Probable transcription factor. This is Homeobox-leucine zipper protein HOX29 (HOX29) from Oryza sativa subsp. indica (Rice).